Reading from the N-terminus, the 188-residue chain is Mitochondrial import receptor subunit TOM20 homolog (188 aa).

Over M1 to N12 the chain is Mitochondrial intermembrane. A helical transmembrane segment spans residues V13 to F31. Residues D32 to E188 are Cytoplasmic-facing. 2 disordered regions span residues K48–G67 and A155–E188. Residues M58–G67 show a composition bias toward low complexity.

Belongs to the Tom20 family. In terms of assembly, forms part of the preprotein translocase complex of the outer mitochondrial membrane (TOM complex).

It localises to the mitochondrion outer membrane. Central component of the receptor complex responsible for the recognition and translocation of cytosolically synthesized mitochondrial preproteins. Together with TOM22 functions as the transit peptide receptor at the surface of the mitochondrion outer membrane and facilitates the movement of preproteins into the translocation pore. This is Mitochondrial import receptor subunit TOM20 homolog (tomm-20) from Caenorhabditis briggsae.